The primary structure comprises 472 residues: Flap endonuclease 1 (472 aa).

The N-domain stretch occupies residues 1-106; the sequence is MGIKGLARFL…EELMKRKERR (106 aa). Aspartate 34 provides a ligand contact to Mg(2+). The DNA site is built by arginine 47 and arginine 72. Residues aspartate 88, glutamate 160, glutamate 162, aspartate 181, and aspartate 183 each contribute to the Mg(2+) site. The segment at 124–263 is I-domain; sequence TIRKQLIRTI…LTAYKLLKKH (140 aa). Glutamate 160 contacts DNA. Residues glycine 241 and aspartate 243 each coordinate DNA. Aspartate 243 is a binding site for Mg(2+). Positions 348–356 are interaction with PCNA; the sequence is AQTSLDSFF.

It belongs to the XPG/RAD2 endonuclease family. FEN1 subfamily. Interacts with PCNA. Three molecules of FEN1 bind to one PCNA trimer with each molecule binding to one PCNA monomer. PCNA stimulates the nuclease activity without altering cleavage specificity. Mg(2+) is required as a cofactor. In terms of processing, phosphorylated. Phosphorylation upon DNA damage induces relocalization to the nuclear plasma.

It localises to the nucleus. The protein resides in the nucleolus. It is found in the nucleoplasm. Its subcellular location is the mitochondrion. Functionally, structure-specific nuclease with 5'-flap endonuclease and 5'-3' exonuclease activities involved in DNA replication and repair. During DNA replication, cleaves the 5'-overhanging flap structure that is generated by displacement synthesis when DNA polymerase encounters the 5'-end of a downstream Okazaki fragment. It enters the flap from the 5'-end and then tracks to cleave the flap base, leaving a nick for ligation. Also involved in the long patch base excision repair (LP-BER) pathway, by cleaving within the apurinic/apyrimidinic (AP) site-terminated flap. Acts as a genome stabilization factor that prevents flaps from equilibrating into structures that lead to duplications and deletions. Also possesses 5'-3' exonuclease activity on nicked or gapped double-stranded DNA, and exhibits RNase H activity. Also involved in replication and repair of rDNA and in repairing mitochondrial DNA. This is Flap endonuclease 1 from Cryptosporidium muris (strain RN66).